A 200-amino-acid chain; its full sequence is Ephrin-A2 (200 aa).

The first 22 residues, 1–22 (MPRWEAAALLAAIVGVCVWSDD), serve as a signal peptide directing secretion. Residues 28-161 (SDRYAVYWNR…KLKVYVRPTN (134 aa)) form the Ephrin RBD domain. Asn36 carries N-linked (GlcNAc...) asparagine glycosylation. 2 cysteine pairs are disulfide-bonded: Cys61-Cys101 and Cys89-Cys150. N-linked (GlcNAc...) asparagine glycosylation is found at Asn161 and Asn175. Residue Asn175 is the site of GPI-anchor amidated asparagine attachment. The propeptide at 176–200 (NSCCSLAVPRAVLVAAPVFWTLLGS) is removed in mature form.

This sequence belongs to the ephrin family. Binds to the receptor tyrosine kinases EPHA3, EPHA4 and EPHA5. Interacts with EPHA8; activates EPHA8. Expressed in a gradient across the tectum being more strongly expressed at the posterior pole.

It is found in the cell membrane. Cell surface GPI-bound ligand for Eph receptors, a family of receptor tyrosine kinases which are crucial for migration, repulsion and adhesion during neuronal, vascular and epithelial development. Binds promiscuously Eph receptors residing on adjacent cells, leading to contact-dependent bidirectional signaling into neighboring cells. The signaling pathway downstream of the receptor is referred to as forward signaling while the signaling pathway downstream of the ephrin ligand is referred to as reverse signaling. With the EPHA2 receptor may play a role in bone remodeling through regulation of osteoclastogenesis and osteoblastogenesis. The sequence is that of Ephrin-A2 (EFNA2) from Gallus gallus (Chicken).